A 365-amino-acid chain; its full sequence is D-alanine--D-alanine ligase (365 aa).

One can recognise an ATP-grasp domain in the interval 156–360; that stretch reads KKLMAAEGLP…YAQLLDNLIE (205 aa). 183–238 contributes to the ATP binding site; that stretch reads KRELGLPVFVKPARGGSSIGISRVADWSEWDAALSLAREHDSKVIVEAEIVGVEVE. Positions 315, 327, and 329 each coordinate Mg(2+).

The protein belongs to the D-alanine--D-alanine ligase family. Mg(2+) serves as cofactor. Mn(2+) is required as a cofactor.

The protein localises to the cytoplasm. It carries out the reaction 2 D-alanine + ATP = D-alanyl-D-alanine + ADP + phosphate + H(+). It participates in cell wall biogenesis; peptidoglycan biosynthesis. Functionally, cell wall formation. The sequence is that of D-alanine--D-alanine ligase from Corynebacterium diphtheriae (strain ATCC 700971 / NCTC 13129 / Biotype gravis).